A 63-amino-acid chain; its full sequence is Large ribosomal subunit protein uL29 (63 aa).

It belongs to the universal ribosomal protein uL29 family.

The sequence is that of Large ribosomal subunit protein uL29 from Klebsiella pneumoniae (strain 342).